Consider the following 397-residue polypeptide: Elongation factor Tu (397 aa).

In terms of domain architecture, tr-type G spans 10-206 (KPHVNIGTIG…EVDAYIPTPE (197 aa)). The G1 stretch occupies residues 19–26 (GHVDHGKT). A GTP-binding site is contributed by 19 to 26 (GHVDHGKT). Mg(2+) is bound at residue Thr26. The G2 stretch occupies residues 60–64 (GITIN). Residues 81 to 84 (DCPG) form a G3 region. Residues 81–85 (DCPGH) and 136–139 (NKAD) each bind GTP. Residues 136–139 (NKAD) form a G4 region. Residues 174 to 176 (SAL) are G5.

Belongs to the TRAFAC class translation factor GTPase superfamily. Classic translation factor GTPase family. EF-Tu/EF-1A subfamily. As to quaternary structure, monomer.

The protein localises to the cytoplasm. It carries out the reaction GTP + H2O = GDP + phosphate + H(+). In terms of biological role, GTP hydrolase that promotes the GTP-dependent binding of aminoacyl-tRNA to the A-site of ribosomes during protein biosynthesis. The chain is Elongation factor Tu from Clostridium acetobutylicum (strain ATCC 824 / DSM 792 / JCM 1419 / IAM 19013 / LMG 5710 / NBRC 13948 / NRRL B-527 / VKM B-1787 / 2291 / W).